Consider the following 755-residue polypeptide: Cellulose synthase-like protein B3 (755 aa).

The next 2 helical transmembrane spans lie at Val24 to Met44 and Trp51 to Ile71. Active-site residues include Asp136 and Asp461. 6 consecutive transmembrane segments (helical) span residues Tyr534–Tyr556, Val569–Phe589, Leu615–Val635, Phe674–Gly694, Gly702–Leu722, and Ile733–Val753.

The protein belongs to the glycosyltransferase 2 family. Plant cellulose synthase-like B subfamily. As to expression, expressed in young seedlings, primarily in the vascular tissue.

The protein localises to the golgi apparatus membrane. In terms of biological role, thought to be a Golgi-localized beta-glycan synthase that polymerize the backbones of noncellulosic polysaccharides (hemicelluloses) of plant cell wall. The chain is Cellulose synthase-like protein B3 (CSLB3) from Arabidopsis thaliana (Mouse-ear cress).